We begin with the raw amino-acid sequence, 165 residues long: UPF0303 protein BceJ2315_15790 (165 aa).

The protein belongs to the UPF0303 family.

The protein is UPF0303 protein BceJ2315_15790 of Burkholderia cenocepacia (strain ATCC BAA-245 / DSM 16553 / LMG 16656 / NCTC 13227 / J2315 / CF5610) (Burkholderia cepacia (strain J2315)).